The primary structure comprises 469 residues: GTPase Der (469 aa).

EngA-type G domains are found at residues 30-193 and 203-376; these read PVLA…PEVA and RRVA…ASWD. Residues 36-43, 83-87, 145-148, 209-216, 256-260, and 321-324 each bind GTP; these read GRPNVGKS, DTGGW, NKVD, GKPNVGKS, DTAGL, and NKWD. The KH-like domain occupies 377-459; that stretch reads TRIPTGPLNS…PIRINVRVRE (83 aa).

It belongs to the TRAFAC class TrmE-Era-EngA-EngB-Septin-like GTPase superfamily. EngA (Der) GTPase family. As to quaternary structure, associates with the 50S ribosomal subunit.

In terms of biological role, GTPase that plays an essential role in the late steps of ribosome biogenesis. The chain is GTPase Der from Mycobacterium ulcerans (strain Agy99).